We begin with the raw amino-acid sequence, 247 residues long: Trypsin-2 (247 aa).

The first 15 residues, 1–15 (MNLLLILTFVAAAVA), serve as a signal peptide directing secretion. A propeptide spans 16–23 (APFDDDDK) (activation peptide). The region spanning 24–244 (IVGGYICEEN…YVDWIKDTIA (221 aa)) is the Peptidase S1 domain. Intrachain disulfides connect Cys-30–Cys-160, Cys-48–Cys-64, Cys-171–Cys-185, and Cys-196–Cys-220. Residue His-63 is the Charge relay system of the active site. Residues Glu-75, Asn-77, Val-80, and Glu-85 each contribute to the Ca(2+) site. Asp-107 serves as the catalytic Charge relay system. Tyr-154 is modified (sulfotyrosine). The active-site Charge relay system is Ser-200.

The protein belongs to the peptidase S1 family. Ca(2+) is required as a cofactor. In terms of processing, sulfated on tyrosine. Post-translationally, sulfation at Tyr-154 increases selectivity towards basic versus apolar residues at the P2' position of inhibitors that bind in a substrate-like fashion. Although the increase in selectivity is relatively small, it may facilitate digestion of a broader range of dietary proteins. In terms of tissue distribution, expressed in Paneth cells, at the base of small intestinal crypts.

It localises to the secreted. The protein localises to the extracellular space. It catalyses the reaction Preferential cleavage: Arg-|-Xaa, Lys-|-Xaa.. Functionally, in the ileum, may be involved in defensin processing, including DEFA5. This chain is Trypsin-2 (PRSS2), found in Homo sapiens (Human).